The primary structure comprises 993 residues: uncharacterized protein (993 aa).

The signal sequence occupies residues 1-28; that stretch reads MKLFPRSILITLVLSFALNLGIVTKIHA. The next 7 helical transmembrane spans lie at 331–351, 359–379, 392–412, 494–514, 521–541, 554–574, and 699–719; these read IVTA…LLAG, YINF…INIT, MIQW…SWVM, MLVS…AFMV, MISI…FLFA, MISF…MFSV, and IKNI…MYNF. Residues 779–904 are disordered; the sequence is GQGGGASDLE…EKVDSTSKGT (126 aa). The span at 805–829 shows a compositional bias: low complexity; sequence TSAPAVTTPTASSSVASSSPKTVSS. Pro residues predominate over residues 838–850; sequence PPAPTEAVSPPPA. Positions 866-879 are enriched in basic and acidic residues; it reads IIRDNNQESKKEID.

The protein belongs to the TrbL/VirB6 family.

The protein localises to the cell membrane. This is an uncharacterized protein from Rickettsia conorii (strain ATCC VR-613 / Malish 7).